The following is a 348-amino-acid chain: VIP36-like protein (348 aa).

A signal peptide spans 1–38 (MAATLGPLGSWQQWRRCLLARDGSRMLLLLLLLGSGQG). The Lumenal portion of the chain corresponds to 39-313 (PQQVGAGQTF…APLPPLSGLA (275 aa)). The L-type lectin-like domain maps to 49–274 (EYLKREHSLS…DVISLKLFEL (226 aa)). The a carbohydrate site is built by serine 93 and aspartate 128. The Ca(2+) site is built by aspartate 159, tyrosine 161, and asparagine 163. An a carbohydrate-binding site is contributed by 161–163 (YPN). Asparagine 181 is a glycosylation site (N-linked (GlcNAc...) asparagine). Residue histidine 188 participates in a carbohydrate binding. Aspartate 191 is a binding site for Ca(2+). A disulfide bridge links cysteine 200 with cysteine 237. Position 258-260 (258-260 (GDL)) interacts with a carbohydrate. The chain crosses the membrane as a helical span at residues 314–334 (LFHIVFFSLVIFVFAIVIGII). Residues 335–348 (LYNKWQEQSRKRFY) lie on the Cytoplasmic side of the membrane. Residues 344–346 (RKR) carry the Endoplasmic reticulum retention signal motif.

The protein localises to the endoplasmic reticulum membrane. It is found in the golgi apparatus membrane. Functionally, may be involved in the regulation of export from the endoplasmic reticulum of a subset of glycoproteins. May function as a regulator of ERGIC-53. The chain is VIP36-like protein (LMAN2L) from Pongo abelii (Sumatran orangutan).